The sequence spans 292 residues: 1D-myo-inositol 2-acetamido-2-deoxy-alpha-D-glucopyranoside deacetylase (292 aa).

H11, D14, and H146 together coordinate Zn(2+).

It belongs to the MshB deacetylase family. It depends on Zn(2+) as a cofactor.

The enzyme catalyses 1D-myo-inositol 2-acetamido-2-deoxy-alpha-D-glucopyranoside + H2O = 1D-myo-inositol 2-amino-2-deoxy-alpha-D-glucopyranoside + acetate. Its function is as follows. Catalyzes the deacetylation of 1D-myo-inositol 2-acetamido-2-deoxy-alpha-D-glucopyranoside (GlcNAc-Ins) in the mycothiol biosynthesis pathway. The protein is 1D-myo-inositol 2-acetamido-2-deoxy-alpha-D-glucopyranoside deacetylase of Acidothermus cellulolyticus (strain ATCC 43068 / DSM 8971 / 11B).